A 449-amino-acid polypeptide reads, in one-letter code: PGL/p-HBAD biosynthesis rhamnosyltransferase (449 aa).

It belongs to the glycosyltransferase 28 family.

In terms of biological role, catalyzes the transfer of the first rhamnosyl residue on p-hydroxybenzoic acid or phenolphthiocerol derivatives to form, after O-methylation at position 2 of the sugar unit, mono-O-methyl-glycosyl-p-hydroxybenzoic acid derivative (p-HBAD I) and 2-O-methyl-rhamnosyl-phenolphthiocerol dimycocerosate (also called mycoside B) during p-hydroxybenzoic acid derivatives (p-HBAD) and glycosylated phenolphthiocerol dimycocerosates (PGL) biosynthesis. The protein is PGL/p-HBAD biosynthesis rhamnosyltransferase of Mycobacterium bovis (strain BCG / Pasteur 1173P2).